A 116-amino-acid chain; its full sequence is Large ribosomal subunit protein bL17 (116 aa).

This sequence belongs to the bacterial ribosomal protein bL17 family. In terms of assembly, part of the 50S ribosomal subunit. Contacts protein L32.

This is Large ribosomal subunit protein bL17 from Helicobacter pylori (strain G27).